Consider the following 391-residue polypeptide: Putative glutamate--cysteine ligase 2-2 (391 aa).

This sequence belongs to the glutamate--cysteine ligase type 2 family. YbdK subfamily.

The catalysed reaction is L-cysteine + L-glutamate + ATP = gamma-L-glutamyl-L-cysteine + ADP + phosphate + H(+). In terms of biological role, ATP-dependent carboxylate-amine ligase which exhibits weak glutamate--cysteine ligase activity. The polypeptide is Putative glutamate--cysteine ligase 2-2 (Saccharopolyspora erythraea (strain ATCC 11635 / DSM 40517 / JCM 4748 / NBRC 13426 / NCIMB 8594 / NRRL 2338)).